Reading from the N-terminus, the 106-residue chain is UPF0122 protein Exig_1902 (106 aa).

Belongs to the UPF0122 family.

Its function is as follows. Might take part in the signal recognition particle (SRP) pathway. This is inferred from the conservation of its genetic proximity to ftsY/ffh. May be a regulatory protein. This Exiguobacterium sibiricum (strain DSM 17290 / CCUG 55495 / CIP 109462 / JCM 13490 / 255-15) protein is UPF0122 protein Exig_1902.